Here is a 115-residue protein sequence, read N- to C-terminus: uncharacterized protein (115 aa).

This is an uncharacterized protein from Gallus gallus (Chicken).